The chain runs to 222 residues: MALSAETESHIYRALRTASGAAAHLVALGFTIFVAVLARPGSSLFSWHPVLMSLAFSFLMTEALLVFSPESSLLHSLSRKGRARCHWVLQLLALLCALLGLGLVILHKEQLGKAHLVTRHGQAGLLAVLWAGLQCSGGVGLLYPKLLPRWPLAKLKLYHATSGLVGYLLGSASLLLGMCSLWFTASVTGAAWYLAVLCPVLTSLVIMNQVSNAYLYRKRIQP.

Over 2–17 (ALSAETESHIYRALRT) the chain is Cytoplasmic. The Cytochrome b561 domain maps to 14 to 217 (ALRTASGAAA…NQVSNAYLYR (204 aa)). The chain crosses the membrane as a helical span at residues 18–38 (ASGAAAHLVALGFTIFVAVLA). Over 39 to 46 (RPGSSLFS) the chain is Lumenal. Residues 47–67 (WHPVLMSLAFSFLMTEALLVF) form a helical membrane-spanning segment. Position 48 (His-48) interacts with heme b. At 68-85 (SPESSLLHSLSRKGRARC) the chain is on the cytoplasmic side. The heme b site is built by His-86 and His-120. The chain crosses the membrane as a helical span at residues 86 to 106 (HWVLQLLALLCALLGLGLVIL). Residues 107-122 (HKEQLGKAHLVTRHGQ) lie on the Lumenal side of the membrane. The chain crosses the membrane as a helical span at residues 123–143 (AGLLAVLWAGLQCSGGVGLLY). Topologically, residues 144–162 (PKLLPRWPLAKLKLYHATS) are cytoplasmic. A heme b-binding site is contributed by His-159. The helical transmembrane segment at 163–183 (GLVGYLLGSASLLLGMCSLWF) threads the bilayer. At 184-186 (TAS) the chain is on the lumenal side. Residues 187–207 (VTGAAWYLAVLCPVLTSLVIM) form a helical membrane-spanning segment. The Cytoplasmic segment spans residues 208–222 (NQVSNAYLYRKRIQP).

Heme b is required as a cofactor.

It localises to the endoplasmic reticulum membrane. The protein localises to the cytoplasmic vesicle membrane. The catalysed reaction is monodehydro-L-ascorbate radical(out) + L-ascorbate(in) = monodehydro-L-ascorbate radical(in) + L-ascorbate(out). It catalyses the reaction Fe(3+)(out) + L-ascorbate(in) = monodehydro-L-ascorbate radical(in) + Fe(2+)(out) + H(+). In terms of biological role, transmembrane reductase that may use ascorbate as an electron donor in the cytoplasm and transfer electrons across endoplasmic reticulum membranes to reduce monodehydro-L-ascorbate radical and iron cations Fe(3+) in the lumen of that compartment. The sequence is that of Transmembrane reductase CYB561D2 from Homo sapiens (Human).